We begin with the raw amino-acid sequence, 507 residues long: NAD(P)H-quinone oxidoreductase chain 4, chloroplastic (507 aa).

15 helical membrane-spanning segments follow: residues 4–24 (FPWL…IFLL), 37–57 (LCIC…HFQL), 87–107 (IGPI…AWPV), 111–131 (AQLF…SFSS), 134–154 (LLLF…LLSM), 167–187 (FILY…GIGL), 208–228 (ALEV…LPII), 242–262 (HYST…YGLV), 272–292 (AHCL…IYAA), 305–325 (IAYS…SLSD), 330–350 (GAIL…FLAG), 386–406 (LALP…GIIT), 416–436 (ILIA…SLSM), 462–482 (LFVS…PDFV), and 483–503 (LSLS…SIVF).

It belongs to the complex I subunit 4 family.

It localises to the plastid. The protein resides in the chloroplast thylakoid membrane. It carries out the reaction a plastoquinone + NADH + (n+1) H(+)(in) = a plastoquinol + NAD(+) + n H(+)(out). The catalysed reaction is a plastoquinone + NADPH + (n+1) H(+)(in) = a plastoquinol + NADP(+) + n H(+)(out). This is NAD(P)H-quinone oxidoreductase chain 4, chloroplastic (ndhD) from Oenothera elata subsp. hookeri (Hooker's evening primrose).